Reading from the N-terminus, the 385-residue chain is MNRRRKLLIPLLFCGAMLTACDDKSAENAAAMTPEVGVVTLSPGSVNVLSELPGRTVPYEVAEIRPQVGGIIIKRNFIEGDKVNQGDSLYQIDPAPLQAELNSAKGSLAKALSTASNARITFNRQASLLKTNYVSRQDYDTARTQLNEAEANVTVAKAAVEQATINLQYANVTSPITGVSGKSSVTVGALVTANQADSLVTVQRLDPIYVDLTQSVQDFLRMKEEVASGQIKQVQGSTPVQLNLENGKRYSQTGTLKFSDPTVDETTGSVTLRAIFPNPNGDLLPGMYVTALVDEGSRQNVLLVPQEGVTHNAQGKATALILDKDDVVQLREIEASKAIGDQWVVTSGLQAGDRVIVSGLQRIRPGIKARAISSSQENASTESKQ.

Residues M1–A20 form the signal peptide. The N-palmitoyl cysteine moiety is linked to residue C21. The S-diacylglycerol cysteine moiety is linked to residue C21.

The protein belongs to the membrane fusion protein (MFP) (TC 8.A.1) family. As to quaternary structure, homotrimer. Part of the tripartite efflux system MdtEF-TolC, which is composed of an inner membrane transporter, MdtF, a membrane fusion protein, MdtE, and an outer membrane component, TolC. The complex forms a large protein conduit and can translocate molecules across both the inner and outer membranes.

It is found in the cell inner membrane. Its function is as follows. Part of the tripartite efflux system MdtEF-TolC, which confers resistance to compounds such as rhodamine 6G, erythromycin, doxorubicin, ethidium bromide, TPP, SDS, deoxycholate, crystal violet and benzalkonium. This Escherichia coli (strain K12) protein is Multidrug resistance protein MdtE (mdtE).